A 352-amino-acid chain; its full sequence is Dysbindin (352 aa).

At Ser11 the chain carries Phosphoserine. Positions 92 to 180 form a coiled coil; the sequence is TSLAELQEQL…AELDTEHAQK (89 aa). The Nuclear export signal motif lies at 243–256; the sequence is LMDLSDQEALDVFL. Residues 267 to 352 form a disordered region; the sequence is SPGLEMESNP…SDQCDSTQDI (86 aa). Residues 274 to 285 show a composition bias toward polar residues; that stretch reads SNPSQNEMNLQI. The segment covering 286 to 301 has biased composition (low complexity); the sequence is PNPSESASQPPASPSA. Phosphoserine occurs at positions 340 and 343.

Belongs to the dysbindin family. As to quaternary structure, interacts (via its coiled coil domain) with KXD1. Interacts with AP3B2, TRIM32, CMYA5, PI4K2 and RNF151. Interacts with the DNA-dependent protein kinase complex DNA-PK; the interaction phosphorylates DTNBP1 in vitro. Interacts directly in this complex with XRCC5 and XRCC6. Interacts with XPO1; the interaction exports DTNBP1 out of the nucleus. Component of the biogenesis of lysosome-related organelles complex 1 (BLOC-1) composed of at least BLOC1S1, BLOC1S2, BLOC1S3, BLOC1S4, BLOC1S5, BLOC1S6, DTNBP1/BLOC1S7 and SNAPIN/BLOC1S8. Interacts directly in the complex with BLOC1S5, BLOC1S6 and SNAPIN/BLOC1S8. The BLOC-1 complex associates with the AP-3 protein complex and membrane protein cargos. This BLOC-1 complex also associates with the BLOC-2 complex in endosomes. Binds to DTNA and DTNB but may not be a physiological binding partner. Interacts with AP3M1. Ubiquitinated by TRIM32. Ubiquitination leads to DTNBP1 degradation. Detected in hippocampus neurons (at protein level). Ubiquitously expressed. The highest expression is observed in testis, liver, kidney, brain, heart and lung. In the brain, found primarily in axon bundles and axon terminals, notably in the cerebellum and hippocampus. Expressed at lower levels in stomach, small intestine and skeletal muscle, where it is detected at the sarcolemma.

The protein resides in the cytoplasm. The protein localises to the cytoplasmic vesicle membrane. It is found in the cytoplasmic vesicle. Its subcellular location is the secretory vesicle. It localises to the synaptic vesicle membrane. The protein resides in the endosome membrane. The protein localises to the melanosome membrane. It is found in the nucleus. Its subcellular location is the postsynaptic density. It localises to the presynaptic cell membrane. The protein resides in the endoplasmic reticulum. In terms of biological role, component of the BLOC-1 complex, a complex that is required for normal biogenesis of lysosome-related organelles (LRO), such as platelet dense granules and melanosomes. In concert with the AP-3 complex, the BLOC-1 complex is required to target membrane protein cargos into vesicles assembled at cell bodies for delivery into neurites and nerve terminals. The BLOC-1 complex, in association with SNARE proteins, is also proposed to be involved in neurite extension. Associates with the BLOC-2 complex to facilitate the transport of TYRP1 independent of AP-3 function. Plays a role in synaptic vesicle trafficking and in neurotransmitter release. Plays a role in the regulation of cell surface exposure of DRD2. May play a role in actin cytoskeleton reorganization and neurite outgrowth. May modulate MAPK8 phosphorylation. Appears to promote neuronal transmission and viability through regulating the expression of SNAP25 and SYN1, modulating PI3-kinase-Akt signaling and influencing glutamatergic release. Regulates the expression of SYN1 through binding to its promoter. Modulates prefrontal cortical activity via the dopamine/D2 pathway. The polypeptide is Dysbindin (Dtnbp1) (Rattus norvegicus (Rat)).